A 331-amino-acid chain; its full sequence is Phosphate acyltransferase (331 aa).

The protein belongs to the PlsX family. As to quaternary structure, homodimer. Probably interacts with PlsY.

It is found in the cytoplasm. It catalyses the reaction a fatty acyl-[ACP] + phosphate = an acyl phosphate + holo-[ACP]. Its pathway is lipid metabolism; phospholipid metabolism. Catalyzes the reversible formation of acyl-phosphate (acyl-PO(4)) from acyl-[acyl-carrier-protein] (acyl-ACP). This enzyme utilizes acyl-ACP as fatty acyl donor, but not acyl-CoA. This is Phosphate acyltransferase from Clostridium acetobutylicum (strain ATCC 824 / DSM 792 / JCM 1419 / IAM 19013 / LMG 5710 / NBRC 13948 / NRRL B-527 / VKM B-1787 / 2291 / W).